The following is an 802-amino-acid chain: Phenylalanine--tRNA ligase beta subunit (802 aa).

The tRNA-binding domain occupies 39–150 (AKALKPFTIA…ADAPIGAAYA (112 aa)). The B5 domain maps to 400–475 (GDDRVIDFPV…RIYGVDKVPM (76 aa)). Mg(2+)-binding residues include Asp-453, Asp-459, Glu-462, and Glu-463. Residues 708-801 (SAFQPVSRDF…VTKKTGGTLR (94 aa)) enclose the FDX-ACB domain.

This sequence belongs to the phenylalanyl-tRNA synthetase beta subunit family. Type 1 subfamily. In terms of assembly, tetramer of two alpha and two beta subunits. Mg(2+) serves as cofactor.

It is found in the cytoplasm. The enzyme catalyses tRNA(Phe) + L-phenylalanine + ATP = L-phenylalanyl-tRNA(Phe) + AMP + diphosphate + H(+). This Bradyrhizobium diazoefficiens (strain JCM 10833 / BCRC 13528 / IAM 13628 / NBRC 14792 / USDA 110) protein is Phenylalanine--tRNA ligase beta subunit.